We begin with the raw amino-acid sequence, 447 residues long: Cysteine--tRNA ligase (447 aa).

Position 28 (Cys28) interacts with Zn(2+). Positions 30–40 (PTVYNYIHIGN) match the 'HIGH' region motif. Zn(2+) contacts are provided by Cys211, His236, and Glu240. Positions 268 to 272 (KMSKS) match the 'KMSKS' region motif. Lys271 is a binding site for ATP.

It belongs to the class-I aminoacyl-tRNA synthetase family. Monomer. Requires Zn(2+) as cofactor.

It is found in the cytoplasm. The enzyme catalyses tRNA(Cys) + L-cysteine + ATP = L-cysteinyl-tRNA(Cys) + AMP + diphosphate. This Streptococcus agalactiae serotype III (strain NEM316) protein is Cysteine--tRNA ligase.